The primary structure comprises 250 residues: Short-chain dehydrogenase RED3 (250 aa).

The NADP(+) site is built by I16, S35, E63, and N91. Catalysis depends on proton donor residues S145 and Y164. NADP(+) is bound by residues Y164, K168, V195, and S197. K168 acts as the Lowers pKa of active site Tyr in catalysis.

This sequence belongs to the short-chain dehydrogenases/reductases (SDR) family.

Its pathway is polyketide biosynthesis. Its function is as follows. Short-chain dehydrogenase; part of the gene cluster that mediates the biosynthesis of pyriculol and pyriculariol, two heptaketides that induce lesion formation upon application on rice leaves but are dispensable for pathogenicity. The highly reducing polyketide synthase synthesizes the heptaketide backbone of pyriculol and pyriculariol. Pyriculol and pyriculariol contain several hydroxyl moieties and double bonds, so it can be assumed that several reduction steps occur during biosynthesis. These reactions could be executed by PKS19 itself or partly by the tailoring enzymes OXR1, OXR2, RED1, RED2 or RED3, identified within the cluster. The FAD-linked oxidoreductase OXR1 is the only tailoring enzyme for which the function has been determined yet, and is involved in the oxidation of dihydropyriculol and dihydropyriculariol into pyriculol and pyriculariol, respectively. The polypeptide is Short-chain dehydrogenase RED3 (Pyricularia oryzae (strain 70-15 / ATCC MYA-4617 / FGSC 8958) (Rice blast fungus)).